Here is a 426-residue protein sequence, read N- to C-terminus: uncharacterized protein (426 aa).

The signal sequence occupies residues Met1–Ala23.

This is an uncharacterized protein from Methanocaldococcus jannaschii (strain ATCC 43067 / DSM 2661 / JAL-1 / JCM 10045 / NBRC 100440) (Methanococcus jannaschii).